The primary structure comprises 337 residues: Na(+)/H(+) exchange regulatory cofactor NHE-RF2 (337 aa).

The region spanning 11-91 (LCRLVRGEQG…QTQLLVVDKE (81 aa)) is the PDZ 1 domain. Positions 112 to 145 (LPPAHNPWEPKPDWACSGSLGSDTGQKDVNGPPR) are disordered. Ser130, Ser183, Ser186, Ser254, Ser269, Ser280, and Ser303 each carry phosphoserine. The region spanning 151 to 231 (LCHLRRGPQG…EARLLVVDPE (81 aa)) is the PDZ 2 domain. Residues 242–337 (VPTEEHVEGP…NRKREIFSNF (96 aa)) are disordered. Positions 255-275 (PVTNGTSPAQLNGGSVCSSRS) are enriched in polar residues. Residues 327 to 337 (WNRKREIFSNF) show a composition bias toward basic and acidic residues.

As to quaternary structure, homodimer, and heterodimer with NHERF1. Binds PDZK1. Interacts with SRY. Binds ADRB2, SLC9A3, P2RY1, P2YR2, RDX and LPAR2. Interacts with MCC. Found in a complex with EZR, PODXL and NHERF2. Interacts (via the PDZ domains) with PODXL (via the C-terminal PDZ-binding motif DTHL); interaction is detected in glomerular epithelium cells. Interacts with SGK1 and KCNJ1/ROMK1. Interacts (via the PDZ domains) with SLC26A6.

The protein localises to the endomembrane system. It is found in the nucleus. It localises to the apical cell membrane. Its function is as follows. Scaffold protein that connects plasma membrane proteins with members of the ezrin/moesin/radixin family and thereby helps to link them to the actin cytoskeleton and to regulate their surface expression. Necessary for cAMP-mediated phosphorylation and inhibition of SLC9A3. May also act as scaffold protein in the nucleus. The polypeptide is Na(+)/H(+) exchange regulatory cofactor NHE-RF2 (Nherf2) (Mus musculus (Mouse)).